The chain runs to 283 residues: Probable endonuclease 4 (283 aa).

Residues histidine 67, histidine 107, glutamate 144, aspartate 178, histidine 181, histidine 215, aspartate 228, histidine 230, and glutamate 260 each coordinate Zn(2+).

Belongs to the AP endonuclease 2 family. It depends on Zn(2+) as a cofactor.

It catalyses the reaction Endonucleolytic cleavage to 5'-phosphooligonucleotide end-products.. In terms of biological role, endonuclease IV plays a role in DNA repair. It cleaves phosphodiester bonds at apurinic or apyrimidinic (AP) sites, generating a 3'-hydroxyl group and a 5'-terminal sugar phosphate. The chain is Probable endonuclease 4 from Citrifermentans bemidjiense (strain ATCC BAA-1014 / DSM 16622 / JCM 12645 / Bem) (Geobacter bemidjiensis).